A 97-amino-acid polypeptide reads, in one-letter code: Protein 9b (97 aa).

The 9b domain maps to 8–97; it reads VLPALHLVDP…PDEFVVVTAK (90 aa).

This sequence belongs to the coronavirus group 2 protein 9b family. In terms of assembly, homodimer.

It localises to the host cytoplasmic vesicle membrane. The protein resides in the host cytoplasm. The protein is Protein 9b of Rhinolophus ferrumequinum (Greater horseshoe bat).